The following is a 529-amino-acid chain: MQQRRPVRRALLSVSDKAGIVEFAQALSARGVELLSTGGTARLLAEKGLPVTEVSDYTGFPEMMDGRVKTLHPKVHGGILGRRGLDDAIMEEHQILPIDMVVVNLYPFAQTVAREGCSLEDAVENIDIGGPTMVRSAAKNHKDVAIVVKSSDYDAIIKEMDANEGSLTLATRFDLAIKAFEHTAAYDSMIANYFGSMVPAYHGESKEAAGRFPRTLNLNFIKKQDMRYGENSHQQAAFYIEENVKEASVATATQVQGKALSYNNIADTDAALECVKEFAEPACVIVKHANPCGVAIGHSILDAYDRAYKTDPTSAFGGIIAFNRELDAETAQAIISRQFVEVIIAPSASEEALKITAAKQNVRVLTCGQWGERVPGLDFKRVNGGLLVQDRDLGMVGAEELRVVTKRQPSEQELRDALFCWKVAKFVKSNAIVYAKNNMTIGIGAGQMSRVYSAKIAGIKAADEGLEVKGSSMASDAFFPFRDGIDAAAAAGVTCVIQPGGSIRDDEVIAAADEHGIAMLFTDMRHFRH.

Residues 1 to 148 (MQQRRPVRRA…KNHKDVAIVV (148 aa)) form the MGS-like domain. N6-acetyllysine is present on Lys-287.

This sequence belongs to the PurH family.

The enzyme catalyses (6R)-10-formyltetrahydrofolate + 5-amino-1-(5-phospho-beta-D-ribosyl)imidazole-4-carboxamide = 5-formamido-1-(5-phospho-D-ribosyl)imidazole-4-carboxamide + (6S)-5,6,7,8-tetrahydrofolate. It carries out the reaction IMP + H2O = 5-formamido-1-(5-phospho-D-ribosyl)imidazole-4-carboxamide. It participates in purine metabolism; IMP biosynthesis via de novo pathway; 5-formamido-1-(5-phospho-D-ribosyl)imidazole-4-carboxamide from 5-amino-1-(5-phospho-D-ribosyl)imidazole-4-carboxamide (10-formyl THF route): step 1/1. The protein operates within purine metabolism; IMP biosynthesis via de novo pathway; IMP from 5-formamido-1-(5-phospho-D-ribosyl)imidazole-4-carboxamide: step 1/1. The sequence is that of Bifunctional purine biosynthesis protein PurH from Escherichia coli O6:H1 (strain CFT073 / ATCC 700928 / UPEC).